The primary structure comprises 210 residues: Large ribosomal subunit protein uL3 (210 aa).

Residues phenylalanine 120 to arginine 143 form a disordered region.

Belongs to the universal ribosomal protein uL3 family. Part of the 50S ribosomal subunit. Forms a cluster with proteins L14 and L19.

Functionally, one of the primary rRNA binding proteins, it binds directly near the 3'-end of the 23S rRNA, where it nucleates assembly of the 50S subunit. This Latilactobacillus sakei subsp. sakei (strain 23K) (Lactobacillus sakei subsp. sakei) protein is Large ribosomal subunit protein uL3.